Consider the following 95-residue polypeptide: Small ribosomal subunit protein bS6 (95 aa).

The protein belongs to the bacterial ribosomal protein bS6 family.

Functionally, binds together with bS18 to 16S ribosomal RNA. The polypeptide is Small ribosomal subunit protein bS6 (Rhodococcus jostii (strain RHA1)).